Reading from the N-terminus, the 239-residue chain is Pyridoxine 5'-phosphate synthase (239 aa).

Asparagine 7 provides a ligand contact to 3-amino-2-oxopropyl phosphate. 1-deoxy-D-xylulose 5-phosphate is bound at residue 9–10 (DH). Arginine 18 provides a ligand contact to 3-amino-2-oxopropyl phosphate. Histidine 43 serves as the catalytic Proton acceptor. Arginine 45 and histidine 50 together coordinate 1-deoxy-D-xylulose 5-phosphate. Catalysis depends on glutamate 70, which acts as the Proton acceptor. Residue threonine 100 coordinates 1-deoxy-D-xylulose 5-phosphate. Histidine 191 acts as the Proton donor in catalysis. Residues glycine 192 and 213 to 214 (GH) each bind 3-amino-2-oxopropyl phosphate.

Belongs to the PNP synthase family. In terms of assembly, homooctamer; tetramer of dimers.

The protein resides in the cytoplasm. It carries out the reaction 3-amino-2-oxopropyl phosphate + 1-deoxy-D-xylulose 5-phosphate = pyridoxine 5'-phosphate + phosphate + 2 H2O + H(+). It participates in cofactor biosynthesis; pyridoxine 5'-phosphate biosynthesis; pyridoxine 5'-phosphate from D-erythrose 4-phosphate: step 5/5. Its function is as follows. Catalyzes the complicated ring closure reaction between the two acyclic compounds 1-deoxy-D-xylulose-5-phosphate (DXP) and 3-amino-2-oxopropyl phosphate (1-amino-acetone-3-phosphate or AAP) to form pyridoxine 5'-phosphate (PNP) and inorganic phosphate. The sequence is that of Pyridoxine 5'-phosphate synthase from Nostoc sp. (strain PCC 7120 / SAG 25.82 / UTEX 2576).